The chain runs to 190 residues: Imidazoleglycerol-phosphate dehydratase (190 aa).

The protein belongs to the imidazoleglycerol-phosphate dehydratase family.

It is found in the cytoplasm. It catalyses the reaction D-erythro-1-(imidazol-4-yl)glycerol 3-phosphate = 3-(imidazol-4-yl)-2-oxopropyl phosphate + H2O. It participates in amino-acid biosynthesis; L-histidine biosynthesis; L-histidine from 5-phospho-alpha-D-ribose 1-diphosphate: step 6/9. In Methanococcus maripaludis (strain C5 / ATCC BAA-1333), this protein is Imidazoleglycerol-phosphate dehydratase.